The chain runs to 598 residues: NADPH-dependent diflavin oxidoreductase 1 (598 aa).

Residues 6–150 (LLVLFGSQTG…AIDPWVGDLW (145 aa)) enclose the Flavodoxin-like domain. Residues 12 to 17 (SQTGTA), 59 to 62 (ATTG), 97 to 106 (LGDSSYAKFN), and Asp-132 each bind FMN. One can recognise an FAD-binding FR-type domain in the interval 206 to 448 (LQPFLAPVIT…VRPGSLVFPK (243 aa)). FAD is bound by residues Arg-350, 382–385 (RAFS), and 416–419 (GLCS). Residues Thr-461, 516–517 (SR), 522–526 (KVYVQ), and Asp-559 each bind NADP(+). An FAD-binding site is contributed by Trp-597.

The protein belongs to the NADPH-dependent diflavin oxidoreductase NDOR1 family. It in the N-terminal section; belongs to the flavodoxin family. In the C-terminal section; belongs to the flavoprotein pyridine nucleotide cytochrome reductase family. In terms of assembly, interacts with CIAPIN1; as part of the cytosolic iron-sulfur (Fe-S) protein assembly (CIA) machinery. Interacts with DCPS. It depends on FAD as a cofactor. Requires FMN as cofactor.

Its subcellular location is the cytoplasm. It is found in the perinuclear region. The enzyme catalyses 2 oxidized [2Fe-2S]-[protein] + NADPH = 2 reduced [2Fe-2S]-[protein] + NADP(+) + H(+). In terms of biological role, NADPH-dependent reductase which is a central component of the cytosolic iron-sulfur (Fe-S) protein assembly (CIA) machinery. Transfers electrons from NADPH via its FAD and FMN prosthetic groups to the [2Fe-2S] cluster of CIAPIN1, another key component of the CIA machinery. In turn, this reduced cluster provides electrons for assembly of cytosolic iron-sulfur cluster proteins. It can also reduce the [2Fe-2S] cluster of CISD1 and activate this protein implicated in Fe/S cluster repair. In vitro can fully activate methionine synthase/MTR in the presence of soluble cytochrome b5/CYB5A. This is NADPH-dependent diflavin oxidoreductase 1 from Mus musculus (Mouse).